The sequence spans 379 residues: Cytochrome b (379 aa).

A run of 4 helical transmembrane segments spans residues 34-54 (LGSLLGMCLMIQIVTGLFLTM), 78-99 (WLIRTLHANGASMFFICMYLHV), 114-134 (WMTGTIILFLVMATAFMGYVL), and 179-199 (FYTFHFVLPFIVMAMVMIHLF). 2 residues coordinate heme b: H84 and H98. 2 residues coordinate heme b: H183 and H197. H202 provides a ligand contact to a ubiquinone. The next 4 membrane-spanning stretches (helical) occupy residues 227 to 247 (YKDMITFIILMMILIMLCLID), 289 to 309 (LGGVIALVMSISILMIMPFYN), 321 to 341 (MNQIMFWIMVIVICLLTWIGK), and 348 to 368 (YIMTGQILTIIYFSYFLFNVH).

It belongs to the cytochrome b family. The main subunits of complex b-c1 are: cytochrome b, cytochrome c1 and the Rieske protein. Heme b is required as a cofactor.

The protein resides in the mitochondrion inner membrane. Its function is as follows. Component of the ubiquinol-cytochrome c reductase complex (complex III or cytochrome b-c1 complex) that is part of the mitochondrial respiratory chain. The b-c1 complex mediates electron transfer from ubiquinol to cytochrome c. Contributes to the generation of a proton gradient across the mitochondrial membrane that is then used for ATP synthesis. This is Cytochrome b (MT-CYB) from Locusta migratoria (Migratory locust).